The following is a 356-amino-acid chain: GTPase Obg (356 aa).

The region spanning 2-160 is the Obg domain; that stretch reads ESFVDEVAIE…KFLRLSLKLL (159 aa). The OBG-type G domain maps to 161 to 329; that stretch reads ADVGIVGLPN…LLENMDEVFF (169 aa). Residues 167–174, 192–196, 215–218, 282–285, and 310–312 each bind GTP; these read GLPNAGKS, FTTLS, DIPG, NKID, and SAD. Residues Ser174 and Thr194 each coordinate Mg(2+).

The protein belongs to the TRAFAC class OBG-HflX-like GTPase superfamily. OBG GTPase family. Monomer. Requires Mg(2+) as cofactor.

Its subcellular location is the cytoplasm. An essential GTPase which binds GTP, GDP and possibly (p)ppGpp with moderate affinity, with high nucleotide exchange rates and a fairly low GTP hydrolysis rate. Plays a role in control of the cell cycle, stress response, ribosome biogenesis and in those bacteria that undergo differentiation, in morphogenesis control. This chain is GTPase Obg, found in Leptospira interrogans serogroup Icterohaemorrhagiae serovar copenhageni (strain Fiocruz L1-130).